A 199-amino-acid polypeptide reads, in one-letter code: Oleosin 21.2 kDa (199 aa).

Residues 1 to 14 (MADTHRVDRTDRHF) are compositionally biased toward basic and acidic residues. The disordered stretch occupies residues 1 to 31 (MADTHRVDRTDRHFQFQSPYEGGRGQGQYEG). Alanine 2 carries the N-acetylalanine modification. Residues 2-56 (ADTHRVDRTDRHFQFQSPYEGGRGQGQYEGDRGYGGGGYKSMMPESGPSSTQVLS) are polar. The segment covering 22–31 (GGRGQGQYEG) has biased composition (gly residues). Transmembrane regions (helical) follow at residues 51–71 (STQV…LALA), 72–92 (GLLL…FLLF), and 96–116 (IVPA…SGMF). The interval 57–128 (LLIGVPVVGS…TGLSSISWVM (72 aa)) is hydrophobic. Residues 159–199 (KGKEMGQHVQNKAQDVKQYDISKPHDTTTKGHETQGRTTAA) are disordered. Basic and acidic residues predominate over residues 172-193 (QDVKQYDISKPHDTTTKGHETQ).

It belongs to the oleosin family.

The protein resides in the lipid droplet. The protein localises to the membrane. In terms of biological role, may have a structural role to stabilize the lipid body during desiccation of the seed by preventing coalescence of the oil. Probably interacts with both lipid and phospholipid moieties of lipid bodies. May also provide recognition signals for specific lipase anchorage in lipolysis during seedling growth. The polypeptide is Oleosin 21.2 kDa (Arabidopsis thaliana (Mouse-ear cress)).